The primary structure comprises 291 residues: Phosphatidylserine decarboxylase proenzyme (291 aa).

Residues D90, H147, and S253 each act as charge relay system; for autoendoproteolytic cleavage activity in the active site. Catalysis depends on S253, which acts as the Schiff-base intermediate with substrate; via pyruvic acid; for decarboxylase activity. S253 bears the Pyruvic acid (Ser); by autocatalysis mark.

It belongs to the phosphatidylserine decarboxylase family. PSD-B subfamily. Prokaryotic type I sub-subfamily. As to quaternary structure, heterodimer of a large membrane-associated beta subunit and a small pyruvoyl-containing alpha subunit. The cofactor is pyruvate. Post-translationally, is synthesized initially as an inactive proenzyme. Formation of the active enzyme involves a self-maturation process in which the active site pyruvoyl group is generated from an internal serine residue via an autocatalytic post-translational modification. Two non-identical subunits are generated from the proenzyme in this reaction, and the pyruvate is formed at the N-terminus of the alpha chain, which is derived from the carboxyl end of the proenzyme. The autoendoproteolytic cleavage occurs by a canonical serine protease mechanism, in which the side chain hydroxyl group of the serine supplies its oxygen atom to form the C-terminus of the beta chain, while the remainder of the serine residue undergoes an oxidative deamination to produce ammonia and the pyruvoyl prosthetic group on the alpha chain. During this reaction, the Ser that is part of the protease active site of the proenzyme becomes the pyruvoyl prosthetic group, which constitutes an essential element of the active site of the mature decarboxylase.

It localises to the cell membrane. It carries out the reaction a 1,2-diacyl-sn-glycero-3-phospho-L-serine + H(+) = a 1,2-diacyl-sn-glycero-3-phosphoethanolamine + CO2. It participates in phospholipid metabolism; phosphatidylethanolamine biosynthesis; phosphatidylethanolamine from CDP-diacylglycerol: step 2/2. Functionally, catalyzes the formation of phosphatidylethanolamine (PtdEtn) from phosphatidylserine (PtdSer). This Photobacterium profundum (strain SS9) protein is Phosphatidylserine decarboxylase proenzyme.